Consider the following 489-residue polypeptide: Ecdysteroid UDP-glucosyltransferase (489 aa).

The signal sequence occupies residues 1–17; that stretch reads MVFLIIALTLLATGARA.

It belongs to the UDP-glycosyltransferase family.

In terms of biological role, catalyzes the transfer of glucose from UDP-glucose to ecdysteroids which are insect molting hormones. Expression of egt interferes with normal insect development and block molting. This Orgyia pseudotsugata (Douglas-fir tussock moth) protein is Ecdysteroid UDP-glucosyltransferase (EGT).